A 422-amino-acid chain; its full sequence is Phospho-N-acetylmuramoyl-pentapeptide-transferase (422 aa).

9 helical membrane passes run 28–48 (LMAIILSLLISAIFGEYFINL), 71–91 (VGVPTMGGIIIIVAILIPCLL), 95–115 (LHNIYMILMLITTIWLGTLGF), 136–156 (IIGQVGLGLIVGLTLYLSPSV), 208–228 (AQAVGWIIFVLVTIFVVTAVS), 239–259 (GMAAGNSAIIGLTLGILAYVS), 279–299 (LVIFICSFIGALIGFLWYNAF), 313–333 (IGGIIAVFAIIIHKELLIPIL), and 399–419 (KITVRFWIVTIVLAAITIITL).

Belongs to the glycosyltransferase 4 family. MraY subfamily. The cofactor is Mg(2+).

Its subcellular location is the cell inner membrane. The catalysed reaction is UDP-N-acetyl-alpha-D-muramoyl-L-alanyl-gamma-D-glutamyl-meso-2,6-diaminopimeloyl-D-alanyl-D-alanine + di-trans,octa-cis-undecaprenyl phosphate = di-trans,octa-cis-undecaprenyl diphospho-N-acetyl-alpha-D-muramoyl-L-alanyl-D-glutamyl-meso-2,6-diaminopimeloyl-D-alanyl-D-alanine + UMP. Its pathway is cell wall biogenesis; peptidoglycan biosynthesis. Its function is as follows. Catalyzes the initial step of the lipid cycle reactions in the biosynthesis of the cell wall peptidoglycan: transfers peptidoglycan precursor phospho-MurNAc-pentapeptide from UDP-MurNAc-pentapeptide onto the lipid carrier undecaprenyl phosphate, yielding undecaprenyl-pyrophosphoryl-MurNAc-pentapeptide, known as lipid I. This is Phospho-N-acetylmuramoyl-pentapeptide-transferase from Phocaeicola vulgatus (strain ATCC 8482 / DSM 1447 / JCM 5826 / CCUG 4940 / NBRC 14291 / NCTC 11154) (Bacteroides vulgatus).